A 170-amino-acid chain; its full sequence is Photosystem I assembly protein Ycf3 (170 aa).

3 TPR repeats span residues 35–68 (AFTH…EIDP), 72–105 (SYIL…NSSL), and 120–153 (GEQA…APSN).

This sequence belongs to the Ycf3 family.

Its subcellular location is the plastid. The protein resides in the chloroplast thylakoid membrane. Its function is as follows. Essential for the assembly of the photosystem I (PSI) complex. May act as a chaperone-like factor to guide the assembly of the PSI subunits. In Anthoceros angustus (Hornwort), this protein is Photosystem I assembly protein Ycf3.